A 356-amino-acid polypeptide reads, in one-letter code: DNA polymerase IV (356 aa).

One can recognise a UmuC domain in the interval 6-187 (IIHVDMDYFF…LDIGDFPGVG (182 aa)). The Mg(2+) site is built by Asp10 and Asp105. Residue Glu106 is part of the active site.

This sequence belongs to the DNA polymerase type-Y family. In terms of assembly, monomer. It depends on Mg(2+) as a cofactor.

Its subcellular location is the cytoplasm. It catalyses the reaction DNA(n) + a 2'-deoxyribonucleoside 5'-triphosphate = DNA(n+1) + diphosphate. Poorly processive, error-prone DNA polymerase involved in untargeted mutagenesis. Copies undamaged DNA at stalled replication forks, which arise in vivo from mismatched or misaligned primer ends. These misaligned primers can be extended by PolIV. Exhibits no 3'-5' exonuclease (proofreading) activity. May be involved in translesional synthesis, in conjunction with the beta clamp from PolIII. The polypeptide is DNA polymerase IV (Staphylococcus saprophyticus subsp. saprophyticus (strain ATCC 15305 / DSM 20229 / NCIMB 8711 / NCTC 7292 / S-41)).